The primary structure comprises 600 residues: MIDLMPKKNTFLLKKKYKEDSNNSVINDLFDFFGKEFCFHQITLTGFPIIWIDKTLLIEVGKFLYHLSQPYIMLYDLHGVDERIRLHREDLPKADFSVFYHLISIERNSDIMIKVPLLENDLILPTFTGLFPNANWYERETWDMFGIIFNNHPNLTRIIMPSTWKGHPLRKNYSARATEYEPFFLNEQKEDLEMEGLKFKPELWGMKRKNDNVEFMFLNLGPNHPSAHGAFRIVLQLDGENIVDCVPDIGYHHRGAEKMAERQSWHSYIPYTDRIEYLGGCVNELPYVLAVEKLANISVPEKAEVIRVMMSELFRINSHLLYISTFIQDVGCMTPVFFAFTDRQKIYDLIEAITGARMHPAWFRIGGVANDLPQGWNILLKEFLDWMPKRLKYYINTALKNSILIHRSKGIAEYNKKEALQWGVTGAGLRATGLNFDVRKWRPYSGYQNYTFEVPVGSGISDCYSRVMIKVEEIYQSLFILKQCLCNMPSGPFKSEDSLTTPPSKECVLQNIETMITHFLQVSWGPVIPENESFQMIEATKGINSYYLISDGGTMSYRTRIRTPSFPHLQQIPSVIRGSLISDLIVYLGSIDFVMSDVDR.

The tract at residues 1–190 (MIDLMPKKNT…EPFFLNEQKE (190 aa)) is NADH dehydrogenase I subunit C. The interval 214–600 (EFMFLNLGPN…IDFVMSDVDR (387 aa)) is NADH dehydrogenase I subunit D.

It in the N-terminal section; belongs to the complex I 30 kDa subunit family. This sequence in the C-terminal section; belongs to the complex I 49 kDa subunit family. NDH-1 is composed of 13 different subunits. Subunits NuoB, CD, E, F, and G constitute the peripheral sector of the complex.

Its subcellular location is the cell membrane. It carries out the reaction a quinone + NADH + 5 H(+)(in) = a quinol + NAD(+) + 4 H(+)(out). NDH-1 shuttles electrons from NADH, via FMN and iron-sulfur (Fe-S) centers, to quinones in the respiratory chain. The immediate electron acceptor for the enzyme in this species is believed to be ubiquinone. Couples the redox reaction to proton translocation (for every two electrons transferred, four hydrogen ions are translocated across the cytoplasmic membrane), and thus conserves the redox energy in a proton gradient. The sequence is that of NADH-quinone oxidoreductase subunit C/D from Buchnera aphidicola subsp. Acyrthosiphon pisum (strain Tuc7).